Here is a 326-residue protein sequence, read N- to C-terminus: tRNA-modifying protein YgfZ (326 aa).

Residues W27 and W189 each contribute to the folate site.

This sequence belongs to the tRNA-modifying YgfZ family.

The protein resides in the cytoplasm. Functionally, folate-binding protein involved in regulating the level of ATP-DnaA and in the modification of some tRNAs. It is probably a key factor in regulatory networks that act via tRNA modification, such as initiation of chromosomal replication. This chain is tRNA-modifying protein YgfZ, found in Escherichia coli O7:K1 (strain IAI39 / ExPEC).